The primary structure comprises 96 residues: Co-chaperonin GroES (96 aa).

This sequence belongs to the GroES chaperonin family. As to quaternary structure, heptamer of 7 subunits arranged in a ring. Interacts with the chaperonin GroEL.

The protein resides in the cytoplasm. Together with the chaperonin GroEL, plays an essential role in assisting protein folding. The GroEL-GroES system forms a nano-cage that allows encapsulation of the non-native substrate proteins and provides a physical environment optimized to promote and accelerate protein folding. GroES binds to the apical surface of the GroEL ring, thereby capping the opening of the GroEL channel. In Streptococcus pyogenes serotype M18 (strain MGAS8232), this protein is Co-chaperonin GroES.